A 128-amino-acid polypeptide reads, in one-letter code: MQKRVRNRLITIIICFCSAFLGIGIILYNLENNIVFFLPPSKINAIEQDKELRVGGLVKTSSINKIAADKISFIITDNIKDLEILYQGILPALFREGQGIIAIGQLSDGKFMARQLLTKHDENYRPTR.

Residues 1–8 lie on the Cytoplasmic side of the membrane; it reads MQKRVRNR. The helical; Signal-anchor for type II membrane protein transmembrane segment at 9 to 29 threads the bilayer; that stretch reads LITIIICFCSAFLGIGIILYN. Residues 30–128 lie on the Periplasmic side of the membrane; the sequence is LENNIVFFLP…KHDENYRPTR (99 aa). H120 and Y124 together coordinate heme.

This sequence belongs to the CcmE/CycJ family.

The protein localises to the cell inner membrane. Heme chaperone required for the biogenesis of c-type cytochromes. Transiently binds heme delivered by CcmC and transfers the heme to apo-cytochromes in a process facilitated by CcmF and CcmH. This Rickettsia canadensis (strain McKiel) protein is Cytochrome c-type biogenesis protein CcmE.